The chain runs to 194 residues: Exopolysaccharide II synthesis transcriptional activator ExpG (194 aa).

In terms of domain architecture, HTH marR-type spans 49-184 (YFELARVMER…AFQTLHRLEL (136 aa)).

Transcriptional activator of genes for galactoglucan synthesis (exopolysaccharide II or EPS II). The protein is Exopolysaccharide II synthesis transcriptional activator ExpG (expG) of Rhizobium meliloti (strain 1021) (Ensifer meliloti).